A 215-amino-acid polypeptide reads, in one-letter code: Elongation factor Ts (215 aa).

The involved in Mg(2+) ion dislocation from EF-Tu stretch occupies residues 80-83 (TDFV).

The protein belongs to the EF-Ts family.

It is found in the cytoplasm. Associates with the EF-Tu.GDP complex and induces the exchange of GDP to GTP. It remains bound to the aminoacyl-tRNA.EF-Tu.GTP complex up to the GTP hydrolysis stage on the ribosome. This chain is Elongation factor Ts, found in Heliobacterium modesticaldum (strain ATCC 51547 / Ice1).